Consider the following 146-residue polypeptide: Protein PBDC1 homolog (146 aa).

This sequence belongs to the PBDC1 family.

It is found in the cytoplasm. This Saccharomyces cerevisiae (strain ATCC 204508 / S288c) (Baker's yeast) protein is Protein PBDC1 homolog.